A 335-amino-acid chain; its full sequence is Glycerol-3-phosphate dehydrogenase [NAD(P)+] (335 aa).

3 residues coordinate NADPH: tryptophan 11, arginine 30, and lysine 106. Lysine 106, glycine 135, and serine 137 together coordinate sn-glycerol 3-phosphate. NADPH is bound at residue alanine 139. Residues lysine 190, aspartate 243, serine 253, arginine 254, and asparagine 255 each coordinate sn-glycerol 3-phosphate. Lysine 190 serves as the catalytic Proton acceptor. An NADPH-binding site is contributed by arginine 254. Positions 278 and 280 each coordinate NADPH.

This sequence belongs to the NAD-dependent glycerol-3-phosphate dehydrogenase family.

The protein localises to the cytoplasm. The catalysed reaction is sn-glycerol 3-phosphate + NAD(+) = dihydroxyacetone phosphate + NADH + H(+). It catalyses the reaction sn-glycerol 3-phosphate + NADP(+) = dihydroxyacetone phosphate + NADPH + H(+). Its pathway is membrane lipid metabolism; glycerophospholipid metabolism. Its function is as follows. Catalyzes the reduction of the glycolytic intermediate dihydroxyacetone phosphate (DHAP) to sn-glycerol 3-phosphate (G3P), the key precursor for phospholipid synthesis. The protein is Glycerol-3-phosphate dehydrogenase [NAD(P)+] of Paucimonas lemoignei (Pseudomonas lemoignei).